The chain runs to 397 residues: Argininosuccinate synthase (397 aa).

An ATP-binding site is contributed by 9–17 (AYSGGLDTT). An L-citrulline-binding site is contributed by tyrosine 87. Glycine 117 lines the ATP pocket. The L-aspartate site is built by threonine 119, asparagine 123, and aspartate 124. Asparagine 123 provides a ligand contact to L-citrulline. L-citrulline contacts are provided by arginine 127, serine 174, serine 183, glutamate 259, and tyrosine 271.

This sequence belongs to the argininosuccinate synthase family. Type 1 subfamily. In terms of assembly, homotetramer.

It is found in the cytoplasm. It carries out the reaction L-citrulline + L-aspartate + ATP = 2-(N(omega)-L-arginino)succinate + AMP + diphosphate + H(+). Its pathway is amino-acid biosynthesis; L-arginine biosynthesis; L-arginine from L-ornithine and carbamoyl phosphate: step 2/3. This Pyrobaculum aerophilum (strain ATCC 51768 / DSM 7523 / JCM 9630 / CIP 104966 / NBRC 100827 / IM2) protein is Argininosuccinate synthase.